The following is a 505-amino-acid chain: ATP synthase subunit alpha (505 aa).

169–176 (GDRQTGKT) is an ATP binding site.

This sequence belongs to the ATPase alpha/beta chains family. As to quaternary structure, F-type ATPases have 2 components, CF(1) - the catalytic core - and CF(0) - the membrane proton channel. CF(1) has five subunits: alpha(3), beta(3), gamma(1), delta(1), epsilon(1). CF(0) has three main subunits: a(1), b(2) and c(9-12). The alpha and beta chains form an alternating ring which encloses part of the gamma chain. CF(1) is attached to CF(0) by a central stalk formed by the gamma and epsilon chains, while a peripheral stalk is formed by the delta and b chains.

Its subcellular location is the cell membrane. The enzyme catalyses ATP + H2O + 4 H(+)(in) = ADP + phosphate + 5 H(+)(out). Functionally, produces ATP from ADP in the presence of a proton gradient across the membrane. The alpha chain is a regulatory subunit. The chain is ATP synthase subunit alpha from Alkaliphilus metalliredigens (strain QYMF).